Reading from the N-terminus, the 148-residue chain is Arginine repressor (148 aa).

The protein belongs to the ArgR family.

The protein localises to the cytoplasm. It functions in the pathway amino-acid biosynthesis; L-arginine biosynthesis [regulation]. Its function is as follows. Regulates arginine biosynthesis genes. The chain is Arginine repressor from Chlorobium luteolum (strain DSM 273 / BCRC 81028 / 2530) (Pelodictyon luteolum).